The primary structure comprises 152 residues: Deoxyuridine 5'-triphosphate nucleotidohydrolase (152 aa).

Substrate contacts are provided by residues Arg72–Gly74, Asn85, and Thr89–Asp91.

It belongs to the dUTPase family. Requires Mg(2+) as cofactor.

It catalyses the reaction dUTP + H2O = dUMP + diphosphate + H(+). Its pathway is pyrimidine metabolism; dUMP biosynthesis; dUMP from dCTP (dUTP route): step 2/2. Its function is as follows. This enzyme is involved in nucleotide metabolism: it produces dUMP, the immediate precursor of thymidine nucleotides and it decreases the intracellular concentration of dUTP so that uracil cannot be incorporated into DNA. The protein is Deoxyuridine 5'-triphosphate nucleotidohydrolase of Rhodopseudomonas palustris (strain BisB5).